The sequence spans 307 residues: Mitochondrial glycine transporter (307 aa).

Solcar repeat units lie at residues 8–87 (PRNS…MRSS), 115–199 (LTMY…SKQL), and 221–305 (TSTT…LVKR). 6 helical membrane-spanning segments follow: residues 14 to 39 (LIGG…TRIQ), 62 to 88 (GTLP…RSSL), 121 to 146 (LLTG…VRYE), 174 to 197 (GFGA…EKSK), 225 to 251 (VNTT…KTRM), and 280 to 298 (GLSM…AWGI).

Belongs to the mitochondrial carrier (TC 2.A.29) family. SLC25A38 subfamily.

It is found in the mitochondrion. Its subcellular location is the mitochondrion inner membrane. The enzyme catalyses glycine(in) = glycine(out). Functionally, mitochondrial glycine transporter that imports glycine into the mitochondrial matrix. Plays an important role in providing glycine for the first enzymatic step in heme biosynthesis, the condensation of glycine with succinyl-CoA to produce 5-aminolevulinate (ALA) in the mitochondrial matrix. The chain is Mitochondrial glycine transporter from Saccharomyces cerevisiae (strain ATCC 204508 / S288c) (Baker's yeast).